Consider the following 505-residue polypeptide: AMP phosphorylase (505 aa).

AMP-binding positions include glycine 170, 196-201, and threonine 205; that span reads SRAITS. The active-site Proton donor is aspartate 258. Positions 266 and 290 each coordinate AMP.

The protein belongs to the thymidine/pyrimidine-nucleoside phosphorylase family. Type 2 subfamily.

It catalyses the reaction AMP + phosphate = alpha-D-ribose 1,5-bisphosphate + adenine. It carries out the reaction CMP + phosphate = cytosine + alpha-D-ribose 1,5-bisphosphate. The catalysed reaction is UMP + phosphate = alpha-D-ribose 1,5-bisphosphate + uracil. Catalyzes the conversion of AMP and phosphate to adenine and ribose 1,5-bisphosphate (R15P). Exhibits phosphorylase activity toward CMP and UMP in addition to AMP. Functions in an archaeal AMP degradation pathway, together with R15P isomerase and RubisCO. The chain is AMP phosphorylase from Methanococcus maripaludis (strain DSM 14266 / JCM 13030 / NBRC 101832 / S2 / LL).